Consider the following 432-residue polypeptide: Septin-14 (432 aa).

Residues 49-315 (QGFTFNILCV…ECYRYQKLQK (267 aa)) form the Septin-type G domain. The G1 motif stretch occupies residues 59–66 (GETGIGKS). Residues 59–66 (GETGIGKS), glycine 114, 195–203 (KADTISKND), glycine 249, and arginine 264 each bind GTP. The tract at residues 111-114 (ETVG) is G3 motif. The tract at residues 194–197 (AKAD) is G4 motif. Residues 332 to 412 (EIFEAKRQEF…IIDFYKMKAA (81 aa)) adopt a coiled-coil conformation. Residues 369–432 (EAEKELQDKF…DTKKDKHRKK (64 aa)) are required for interaction with SEPTIN4. Required for migration of cortical neurons during corticogenesis.

This sequence belongs to the TRAFAC class TrmE-Era-EngA-EngB-Septin-like GTPase superfamily. Septin GTPase family. In terms of assembly, septins polymerize into heterooligomeric protein complexes that form filaments, and can associate with cellular membranes, actin filaments and microtubules. GTPase activity is required for filament formation. Interacts with ACTN4. Interacts with SEPTIN9. Interacts (via C-terminus) with SEPTIN4. As to expression, testis-specific (at protein level).

It localises to the cytoplasm. It is found in the cytoskeleton. The protein localises to the cell projection. The protein resides in the axon. Its subcellular location is the dendrite. It localises to the perikaryon. It is found in the perinuclear region. The protein localises to the cytoplasmic vesicle. The protein resides in the secretory vesicle. Its subcellular location is the acrosome. Its function is as follows. Filament-forming cytoskeletal GTPase. Involved in the migration of cortical neurons and the formation of neuron leading processes during embryonic development. Plays a role in sperm head formation during spermiogenesis, potentially via facilitating localization of ACTN4 to cell filaments. The protein is Septin-14 of Homo sapiens (Human).